Here is an 856-residue protein sequence, read N- to C-terminus: Translation initiation factor IF-2 (856 aa).

Residues 356 to 526 enclose the tr-type G domain; the sequence is PRAPVVTVMG…LLIADLLELK (171 aa). Residues 365-372 form a G1 region; sequence GHVDHGKT. Residue 365–372 coordinates GTP; that stretch reads GHVDHGKT. The tract at residues 390-394 is G2; the sequence is GITQH. The tract at residues 412–415 is G3; the sequence is DTPG. Residues 412–416 and 466–469 each bind GTP; these read DTPGH and NKID. Residues 466-469 form a G4 region; sequence NKID. Positions 502-504 are G5; the sequence is SAK.

Belongs to the TRAFAC class translation factor GTPase superfamily. Classic translation factor GTPase family. IF-2 subfamily.

The protein resides in the cytoplasm. One of the essential components for the initiation of protein synthesis. Protects formylmethionyl-tRNA from spontaneous hydrolysis and promotes its binding to the 30S ribosomal subunits. Also involved in the hydrolysis of GTP during the formation of the 70S ribosomal complex. The sequence is that of Translation initiation factor IF-2 from Ehrlichia ruminantium (strain Welgevonden).